Consider the following 1097-residue polypeptide: DNA polymerase catalytic subunit (1097 aa).

Residues 1069–1097 (RGGDDSDGGDSEKENMDTERSSSHEAMET) form a disordered region. Residues 1078 to 1097 (DSEKENMDTERSSSHEAMET) show a composition bias toward basic and acidic residues.

Belongs to the DNA polymerase type-B family.

The protein localises to the host nucleus. It catalyses the reaction DNA(n) + a 2'-deoxyribonucleoside 5'-triphosphate = DNA(n+1) + diphosphate. This Murid herpesvirus 1 (strain Smith) (MuHV-1) protein is DNA polymerase catalytic subunit (UL54).